A 196-amino-acid polypeptide reads, in one-letter code: 7-methyl-GTP pyrophosphatase (196 aa).

The active-site Proton acceptor is Asp69.

The protein belongs to the Maf family. YceF subfamily. A divalent metal cation is required as a cofactor.

It localises to the cytoplasm. It carries out the reaction N(7)-methyl-GTP + H2O = N(7)-methyl-GMP + diphosphate + H(+). Its function is as follows. Nucleoside triphosphate pyrophosphatase that hydrolyzes 7-methyl-GTP (m(7)GTP). May have a dual role in cell division arrest and in preventing the incorporation of modified nucleotides into cellular nucleic acids. In Photorhabdus laumondii subsp. laumondii (strain DSM 15139 / CIP 105565 / TT01) (Photorhabdus luminescens subsp. laumondii), this protein is 7-methyl-GTP pyrophosphatase.